The sequence spans 135 residues: L-ectoine synthase (135 aa).

Belongs to the ectoine synthase family.

The enzyme catalyses (2S)-4-acetamido-2-aminobutanoate = L-ectoine + H2O. It participates in amine and polyamine biosynthesis; ectoine biosynthesis; L-ectoine from L-aspartate 4-semialdehyde: step 3/3. Functionally, catalyzes the circularization of gamma-N-acetyl-alpha,gamma-diaminobutyric acid (ADABA) to ectoine (1,4,5,6-tetrahydro-2-methyl-4-pyrimidine carboxylic acid), which is an excellent osmoprotectant. The protein is L-ectoine synthase of Saccharopolyspora erythraea (strain ATCC 11635 / DSM 40517 / JCM 4748 / NBRC 13426 / NCIMB 8594 / NRRL 2338).